Here is a 201-residue protein sequence, read N- to C-terminus: 3-isopropylmalate dehydratase small subunit (201 aa).

Belongs to the LeuD family. LeuD type 1 subfamily. Heterodimer of LeuC and LeuD.

It catalyses the reaction (2R,3S)-3-isopropylmalate = (2S)-2-isopropylmalate. It participates in amino-acid biosynthesis; L-leucine biosynthesis; L-leucine from 3-methyl-2-oxobutanoate: step 2/4. Functionally, catalyzes the isomerization between 2-isopropylmalate and 3-isopropylmalate, via the formation of 2-isopropylmaleate. The sequence is that of 3-isopropylmalate dehydratase small subunit from Allorhizobium ampelinum (strain ATCC BAA-846 / DSM 112012 / S4) (Agrobacterium vitis (strain S4)).